The primary structure comprises 160 residues: Phosphopantetheine adenylyltransferase (160 aa).

Substrate is bound at residue threonine 10. Residues 10–11 and histidine 18 each bind ATP; that span reads TF. Residues lysine 42, methionine 74, and arginine 88 each coordinate substrate. Residues 89–91, glutamate 99, and 124–130 each bind ATP; these read GVR and WSYISST.

The protein belongs to the bacterial CoaD family. Homohexamer. Requires Mg(2+) as cofactor.

The protein resides in the cytoplasm. It carries out the reaction (R)-4'-phosphopantetheine + ATP + H(+) = 3'-dephospho-CoA + diphosphate. The protein operates within cofactor biosynthesis; coenzyme A biosynthesis; CoA from (R)-pantothenate: step 4/5. Functionally, reversibly transfers an adenylyl group from ATP to 4'-phosphopantetheine, yielding dephospho-CoA (dPCoA) and pyrophosphate. This Sodalis glossinidius (strain morsitans) protein is Phosphopantetheine adenylyltransferase.